A 902-amino-acid chain; its full sequence is MEVQLGLGRVYPRPPSKTYRGAFQNLFQSVREAIQNPGPRHPEAASIAPPGACLQQRQETSPRRRRRQQHPEDGSPQAHIRGTTGYLALEEEQQPSQQQSASEGHPESGCLPEPGAATAPGKGLPQQPPAPPDQDDSAAPSTLSLLGPTFPGLSSCSADIKDILSEAGTMQLLQQQQQQQQQQQQQQQQQQQQQQEVISEGSSSVRAREATGAPSSSKDSYLGGNSTISDSAKELCKAVSVSMGLGVEALEHLSPGEQLRGDCMYASLLGGPPAVRPTPCAPLAECKGLSLDEGPGKGTEETAEYSSFKGGYAKGLEGESLGCSGSSEAGSSGTLEIPSSLSLYKSGAVDEAAAYQNRDYYNFPLALSGPPHPPPPTHPHARIKLENPSDYGSAWAAAAAQCRYGDLASLHGGSVAGPSTGSPPATASSSWHTLFTAEEGQLYGPGGGGGSSSPSDAGPVAPYGYTRPPQGLASQEGDFSASEVWYPGGVVNRVPYPSPSCVKSEMGPWMENYSGPYGDMRLDSTRDHVLPIDYYFPPQKTCLICGDEASGCHYGALTCGSCKVFFKRAAEGKQKYLCASRNDCTIDKFRRKNCPSCRLRKCYEAGMTLGARKLKKLGNLKLQEEGENSSAGSPTEDPSQKMTVSHIEGYECQPIFLNVLEAIEPGVVCAGHDNNQPDSFAALLSSLNELGERQLVHVVKWAKALPGFRNLHVDDQMAVIQYSWMGLMVFAMGWRSFTNVNSRMLYFAPDLVFNEYRMHKSRMYSQCVRMRHLSQEFGWLQITPQEFLCMKALLLFSIIPVDGLKNQKFFDELRMNYIKELDRIIACKRKNPTSCSRRFYQLTKLLDSVQPIARELHQFTFDLLIKSHMVSVDFPEMMAEIISVQVPKILSGKVKPIYFHTQ.

The segment at 1–540 (MEVQLGLGRV…PIDYYFPPQK (540 aa)) is modulating. The interval 1-569 (MEVQLGLGRV…GSCKVFFKRA (569 aa)) is interaction with ZNF318. Disordered regions lie at residues 35-146 (QNPG…LSLL) and 194-224 (QQEV…YLGG). Ser61 is subject to Phosphoserine; by CDK9. Residue Ser75 is modified to Phosphoserine. A compositionally biased stretch (low complexity) spans 94–103 (QPSQQQSASE). Polar residues-rich tracts occupy residues 196–205 (EVISEGSSSV) and 213–224 (APSSSKDSYLGG). The residue at position 221 (Tyr221) is a Phosphotyrosine; by CSK. The residue at position 254 (Ser254) is a Phosphoserine. Tyr265 is modified (phosphotyrosine; by CSK and TNK2). Ser290 carries the phosphoserine modification. 4 positions are modified to phosphotyrosine; by CSK: Tyr305, Tyr344, Tyr355, and Tyr360. The residue at position 361 (Tyr361) is a Phosphotyrosine; by CSK and TNK2. Lys384 participates in a covalent cross-link: Glycyl lysine isopeptide (Lys-Gly) (interchain with G-Cter in SUMO). Phosphotyrosine; by CSK is present on Tyr391. Residues 439 to 465 (EGQLYGPGGGGGSSSPSDAGPVAPYGY) are disordered. Residue Lys503 forms a Glycyl lysine isopeptide (Lys-Gly) (interchain with G-Cter in SUMO) linkage. Phosphotyrosine; by CSK is present on residues Tyr517 and Tyr534. Positions 534-901 (YYFPPQKTCL…GKVKPIYFHT (368 aa)) are interaction with LPXN. Residues 541 to 614 (TCLICGDEAS…AGMTLGARKL (74 aa)) constitute a DNA-binding region (nuclear receptor). 2 consecutive NR C4-type zinc fingers follow at residues 542-562 (CLIC…CGSC) and 578-602 (CASR…LRKC). Residues 554–644 (YGALTCGSCK…TEDPSQKMTV (91 aa)) are interaction with HIPK3. The interaction with CCAR1 stretch occupies residues 574 to 901 (QKYLCASRND…GKVKPIYFHT (328 aa)). Positions 607 to 901 (MTLGARKLKK…GKVKPIYFHT (295 aa)) are interaction with KAT7. Ser633 carries the phosphoserine modification. The NR LBD domain occupies 651–882 (ECQPIFLNVL…DFPEMMAEII (232 aa)). Residues Asn688 and Arg735 each contribute to the 17beta-hydroxy-5alpha-androstan-3-one site. Residues Lys828 and Lys830 each participate in a glycyl lysine isopeptide (Lys-Gly) (interchain with G-Cter in ubiquitin) cross-link. 17beta-hydroxy-5alpha-androstan-3-one is bound at residue Thr860. A Phosphotyrosine; by CSK modification is found at Tyr898.

It belongs to the nuclear hormone receptor family. NR3 subfamily. In terms of assembly, binds DNA as a homodimer. Part of a ternary complex containing AR, EFCAB6/DJBP and PARK7. Interacts with HIPK3 and NR0B2 in the presence of androgen. The ligand binding domain interacts with KAT7/HBO1 in the presence of dihydrotestosterone. Interacts with EFCAB6/DJBP, PQBP1, RANBP9, RBAK, SPDEF, SRA1, TGFB1I1, ZNF318 and RREB1. Interacts with ZMIZ1/ZIMP10 and ZMIZ2/ZMIP7 which both enhance its transactivation activity. Interacts with SLC30A9 and RAD54L2/ARIP4. Interacts with MACROD1 (via macro domain). Interacts via the ligand-binding domain with LXXLL and FXXLF motifs from NCOA1, NCOA2, NCOA3 and MAGEA11. Interacts (via nuclear receptor DNA binding domain and nuclear receptor ligand binding domain) with NCOA4. The AR N-terminal poly-Gln region binds Ran resulting in enhancement of AR-mediated transactivation. Ran-binding decreases as the poly-Gln length increases. Interacts with HIP1 (via coiled coil domain). Interacts (via ligand-binding domain) with TRIM68. Interacts with TNK2. Interacts with USP26. Interacts with RNF6. Interacts (regulated by RNF6 probably through polyubiquitination) with RNF14; regulates AR transcriptional activity. Interacts with PRMT2 and TRIM24. Interacts with RACK1. Interacts with RANBP10; this interaction enhances dihydrotestosterone-induced AR transcriptional activity. Interacts with PRPF6 in a hormone-independent way; this interaction enhances dihydrotestosterone-induced AR transcriptional activity. Interacts with STK4/MST1. Interacts with ZIPK/DAPK3. Interacts with LPXN. Interacts with MAK. Part of a complex containing AR, MAK and NCOA3. Interacts with CRY1. Interacts with CCAR1 and GATA2. Interacts with BUD31. Interacts with ARID4A. Interacts with ARID4B. Interacts (via NR LBD domain) with ZBTB7A; the interaction is direct and androgen-dependent. Interacts with NCOR1. Interacts with NCOR2. Interacts with CRY2 in a ligand-dependent manner. Post-translationally, phosphorylated in prostate cancer cells in response to several growth factors including EGF. Phosphorylation is induced by c-Src kinase (CSK). Tyr-517 is one of the major phosphorylation sites and an increase in phosphorylation and Src kinase activity is associated with prostate cancer progression. Phosphorylation by TNK2 enhances the DNA-binding and transcriptional activity. Phosphorylation at Ser-61 by CDK9 regulates AR promoter selectivity and cell growth. Phosphorylation by PAK6 leads to AR-mediated transcription inhibition. In terms of processing, sumoylated on Lys-384 (major) and Lys-503. Ubiquitinated. Deubiquitinated by USP26. 'Lys-6' and 'Lys-27'-linked polyubiquitination by RNF6 modulates AR transcriptional activity and specificity. Palmitoylated by ZDHHC7 and ZDHHC21. Palmitoylation is required for plasma membrane targeting and for rapid intracellular signaling via ERK and AKT kinases and cAMP generation. In terms of tissue distribution, highest levels in the seminal vesicle, ventral prostate and coagulating gland with lower levels in the kidney and levator ani muscle.

It localises to the nucleus. The protein resides in the cytoplasm. In terms of biological role, steroid hormone receptors are ligand-activated transcription factors that regulate eukaryotic gene expression and affect cellular proliferation and differentiation in target tissues. Transcription factor activity is modulated by bound coactivator and corepressor proteins like ZBTB7A that recruits NCOR1 and NCOR2 to the androgen response elements/ARE on target genes, negatively regulating androgen receptor signaling and androgen-induced cell proliferation. Transcription activation is also down-regulated by NR0B2. Activated, but not phosphorylated, by HIPK3 and ZIPK/DAPK3. In Rattus norvegicus (Rat), this protein is Androgen receptor (Ar).